The following is a 194-amino-acid chain: MPILAQAVLASHNAGKVKEFQGWLQPWIGELVALPAAIEIAETADSFVANACLKAATAAKVMGEWAIADDSGLAVHALQGAPGIYSARYGATDAERIERLLREMADVSDRAAEFICVIALARPDGTIAVTTEGRCAGEILTAPRGQGGFGYDPVFWVPSQQRTFAEMSPVEKQQVSHRGQALQRLREYFQTLNP.

Residue 11–16 coordinates substrate; it reads SHNAGK. The Proton acceptor role is filled by Asp70. Asp70 contributes to the Mg(2+) binding site. Residues Ser71, 149–152, Lys172, and 177–178 contribute to the substrate site; these read FGYD and HR.

Belongs to the HAM1 NTPase family. Homodimer. Requires Mg(2+) as cofactor.

The catalysed reaction is XTP + H2O = XMP + diphosphate + H(+). It catalyses the reaction dITP + H2O = dIMP + diphosphate + H(+). It carries out the reaction ITP + H2O = IMP + diphosphate + H(+). Its function is as follows. Pyrophosphatase that catalyzes the hydrolysis of nucleoside triphosphates to their monophosphate derivatives, with a high preference for the non-canonical purine nucleotides XTP (xanthosine triphosphate), dITP (deoxyinosine triphosphate) and ITP. Seems to function as a house-cleaning enzyme that removes non-canonical purine nucleotides from the nucleotide pool, thus preventing their incorporation into DNA/RNA and avoiding chromosomal lesions. This chain is dITP/XTP pyrophosphatase, found in Thermosynechococcus vestitus (strain NIES-2133 / IAM M-273 / BP-1).